A 294-amino-acid polypeptide reads, in one-letter code: tRNA dimethylallyltransferase (294 aa).

Residue 7–14 (GPTGSGKS) participates in ATP binding. 9–14 (TGSGKS) contributes to the substrate binding site.

Belongs to the IPP transferase family. Monomer. The cofactor is Mg(2+).

It catalyses the reaction adenosine(37) in tRNA + dimethylallyl diphosphate = N(6)-dimethylallyladenosine(37) in tRNA + diphosphate. Its function is as follows. Catalyzes the transfer of a dimethylallyl group onto the adenine at position 37 in tRNAs that read codons beginning with uridine, leading to the formation of N6-(dimethylallyl)adenosine (i(6)A). This is tRNA dimethylallyltransferase from Akkermansia muciniphila (strain ATCC BAA-835 / DSM 22959 / JCM 33894 / BCRC 81048 / CCUG 64013 / CIP 107961 / Muc).